We begin with the raw amino-acid sequence, 520 residues long: Probable bifunctional tRNA threonylcarbamoyladenosine biosynthesis protein (520 aa).

The kae1 stretch occupies residues 1–318; it reads MKIGPVLGIE…YRADQVLVTW (318 aa). Residues histidine 105, histidine 109, and tyrosine 126 each contribute to the Fe cation site. L-threonylcarbamoyladenylate is bound by residues 126 to 130, aspartate 158, glycine 171, glutamate 175, and asparagine 251; that span reads YASGA. A Fe cation-binding site is contributed by aspartate 279. The Protein kinase domain occupies 327–520; sequence RHPDAYSARG…HEIELRGRYL (194 aa). ATP contacts are provided by residues 333 to 341 and lysine 350; that span reads SARGAEAIV. Aspartate 437 (proton acceptor; for kinase activity) is an active-site residue.

This sequence in the N-terminal section; belongs to the KAE1 / TsaD family. The protein in the C-terminal section; belongs to the protein kinase superfamily. Tyr protein kinase family. BUD32 subfamily. As to quaternary structure, component of the KEOPS complex that consists of Kae1, Bud32, Cgi121 and Pcc1; the whole complex dimerizes. The cofactor is Fe(2+).

It localises to the cytoplasm. It carries out the reaction L-seryl-[protein] + ATP = O-phospho-L-seryl-[protein] + ADP + H(+). The enzyme catalyses L-threonyl-[protein] + ATP = O-phospho-L-threonyl-[protein] + ADP + H(+). It catalyses the reaction L-threonylcarbamoyladenylate + adenosine(37) in tRNA = N(6)-L-threonylcarbamoyladenosine(37) in tRNA + AMP + H(+). Its function is as follows. Required for the formation of a threonylcarbamoyl group on adenosine at position 37 (t(6)A37) in tRNAs that read codons beginning with adenine. Is a component of the KEOPS complex that is probably involved in the transfer of the threonylcarbamoyl moiety of threonylcarbamoyl-AMP (TC-AMP) to the N6 group of A37. The Kae1 domain likely plays a direct catalytic role in this reaction. The Bud32 domain probably displays kinase activity that regulates Kae1 function. The polypeptide is Probable bifunctional tRNA threonylcarbamoyladenosine biosynthesis protein (Methanospirillum hungatei JF-1 (strain ATCC 27890 / DSM 864 / NBRC 100397 / JF-1)).